A 140-amino-acid polypeptide reads, in one-letter code: Translation initiation factor 2 subunit beta (140 aa).

It belongs to the eIF-2-beta/eIF-5 family. As to quaternary structure, heterotrimer composed of an alpha, a beta and a gamma chain.

Functionally, eIF-2 functions in the early steps of protein synthesis by forming a ternary complex with GTP and initiator tRNA. The sequence is that of Translation initiation factor 2 subunit beta (eif2b) from Pyrococcus horikoshii (strain ATCC 700860 / DSM 12428 / JCM 9974 / NBRC 100139 / OT-3).